A 132-amino-acid chain; its full sequence is ATP synthase epsilon chain (132 aa).

It belongs to the ATPase epsilon chain family. In terms of assembly, F-type ATPases have 2 components, CF(1) - the catalytic core - and CF(0) - the membrane proton channel. CF(1) has five subunits: alpha(3), beta(3), gamma(1), delta(1), epsilon(1). CF(0) has three main subunits: a, b and c.

It localises to the cell membrane. Produces ATP from ADP in the presence of a proton gradient across the membrane. The sequence is that of ATP synthase epsilon chain from Brevibacillus brevis (strain 47 / JCM 6285 / NBRC 100599).